A 237-amino-acid polypeptide reads, in one-letter code: MTPKRALISLTSYHGPFYKDGAKTGVFVVEILRSFDTFEKHGFEVDFVSETGGFGWDEHYLPKSFIGGEDKMNFETKNSAFNKALARIKTANEVNASDYKIFFASAGHGALFDYPKAKNLQDIASKIYANGGVIAAICHGPLLFDGLIDIKTTRPLIEGKAITGFPLEGEIALGVDDILRSRKLTTVERVANKNGAKYLAPIHPWDDYSITDGKLVTGVNANSSYSTTIRAINALYS.

Catalysis depends on residues cysteine 138, histidine 139, and glutamate 170.

The protein belongs to the peptidase C56 family. HSP31-like subfamily. In terms of assembly, homodimer.

It is found in the cytoplasm. It localises to the P-body. The catalysed reaction is methylglyoxal + H2O = (R)-lactate + H(+). Functionally, catalyzes the conversion of methylglyoxal (MG) to D-lactate in a single glutathione (GSH)-independent step. May play a role in detoxifying endogenously produced glyoxals. Involved in protection against reactive oxygen species (ROS). Important for viability in stationary phase. May negatively regulate TORC1 in response to nutrient limitation. The polypeptide is Probable glutathione-independent glyoxalase HSP32 (Saccharomyces cerevisiae (strain ATCC 204508 / S288c) (Baker's yeast)).